Here is a 315-residue protein sequence, read N- to C-terminus: Aspartate carbamoyltransferase catalytic subunit (315 aa).

Residues R64 and T65 each coordinate carbamoyl phosphate. K93 is an L-aspartate binding site. Residues R114, H142, and Q145 each contribute to the carbamoyl phosphate site. L-aspartate contacts are provided by R175 and R237. Carbamoyl phosphate contacts are provided by L276 and P277.

Belongs to the aspartate/ornithine carbamoyltransferase superfamily. ATCase family. In terms of assembly, heterooligomer of catalytic and regulatory chains.

The catalysed reaction is carbamoyl phosphate + L-aspartate = N-carbamoyl-L-aspartate + phosphate + H(+). The protein operates within pyrimidine metabolism; UMP biosynthesis via de novo pathway; (S)-dihydroorotate from bicarbonate: step 2/3. In terms of biological role, catalyzes the condensation of carbamoyl phosphate and aspartate to form carbamoyl aspartate and inorganic phosphate, the committed step in the de novo pyrimidine nucleotide biosynthesis pathway. The sequence is that of Aspartate carbamoyltransferase catalytic subunit from Thermofilum pendens (strain DSM 2475 / Hrk 5).